The primary structure comprises 385 residues: Homoserine O-succinyltransferase (385 aa).

In terms of domain architecture, AB hydrolase-1 spans N46 to L355. S151 acts as the Nucleophile in catalysis. R221 contacts substrate. Residues D318 and H351 contribute to the active site. Substrate is bound at residue D352.

This sequence belongs to the AB hydrolase superfamily. MetX family. In terms of assembly, homodimer.

It localises to the cytoplasm. The catalysed reaction is L-homoserine + succinyl-CoA = O-succinyl-L-homoserine + CoA. Its pathway is amino-acid biosynthesis; L-methionine biosynthesis via de novo pathway; O-succinyl-L-homoserine from L-homoserine: step 1/1. Its function is as follows. Transfers a succinyl group from succinyl-CoA to L-homoserine, forming succinyl-L-homoserine. This is Homoserine O-succinyltransferase from Hydrogenovibrio crunogenus (strain DSM 25203 / XCL-2) (Thiomicrospira crunogena).